Consider the following 318-residue polypeptide: Receptor homology region, transmembrane domain- and RING domain-containing protein 6 (318 aa).

An N-terminal signal peptide occupies residues 1–20 (MNGSWITILSLLVISQLASS). Topologically, residues 22-162 (VTLIGKNTFL…LIPGFGISSW (141 aa)) are lumenal. A disulfide bond links cysteine 62 and cysteine 87. The region spanning 70 to 143 (EKGSKFRPSY…RTSGEVLKEY (74 aa)) is the PA domain. Asparagine 121 is a glycosylation site (N-linked (GlcNAc...) asparagine). Residues 163–183 (SIMAITFVSLLVISAVLASYF) traverse the membrane as a helical segment. Over 184-318 (SVRRHRIRQH…DLPIVVRVYL (135 aa)) the chain is Cytoplasmic. An RING-type; atypical zinc finger spans residues 233 to 275 (CAICIDDYRVGEILRILPCKHKYHAVCIDSWLGRCRSFCPVCK).

The protein resides in the prevacuolar compartment membrane. The protein localises to the protein storage vacuole membrane. Functionally, involved in the trafficking of vacuolar proteins. May function as a sorting receptor for protein trafficking to the protein storage vacuole (PSV). The protein is Receptor homology region, transmembrane domain- and RING domain-containing protein 6 (RMR6) of Arabidopsis thaliana (Mouse-ear cress).